The following is a 147-amino-acid chain: Hemoglobin anodic subunit beta (147 aa).

Residues 2-147 form the Globin domain; it reads EWTEDERTAI…VTSALARQYH (146 aa). Heme b-binding residues include His-63 and His-92.

Belongs to the globin family. In terms of assembly, heterotetramer of two alpha chains and two beta chains. In terms of tissue distribution, red blood cells.

Functionally, involved in oxygen transport from gills to the various peripheral tissues. This is Hemoglobin anodic subunit beta (hbb1) from Anguilla anguilla (European freshwater eel).